A 127-amino-acid chain; its full sequence is Large ribosomal subunit protein eL8 (127 aa).

Belongs to the eukaryotic ribosomal protein eL8 family. In terms of assembly, part of the 50S ribosomal subunit. Probably part of the RNase P complex.

The protein localises to the cytoplasm. In terms of biological role, multifunctional RNA-binding protein that recognizes the K-turn motif in ribosomal RNA, the RNA component of RNase P, box H/ACA, box C/D and box C'/D' sRNAs. This is Large ribosomal subunit protein eL8 from Desulfurococcus amylolyticus (strain DSM 18924 / JCM 16383 / VKM B-2413 / 1221n) (Desulfurococcus kamchatkensis).